A 360-amino-acid polypeptide reads, in one-letter code: Nicotinate-nucleotide--dimethylbenzimidazole phosphoribosyltransferase (360 aa).

Catalysis depends on glutamate 327, which acts as the Proton acceptor.

Belongs to the CobT family.

The enzyme catalyses 5,6-dimethylbenzimidazole + nicotinate beta-D-ribonucleotide = alpha-ribazole 5'-phosphate + nicotinate + H(+). It functions in the pathway nucleoside biosynthesis; alpha-ribazole biosynthesis; alpha-ribazole from 5,6-dimethylbenzimidazole: step 1/2. Functionally, catalyzes the synthesis of alpha-ribazole-5'-phosphate from nicotinate mononucleotide (NAMN) and 5,6-dimethylbenzimidazole (DMB). In Shewanella baltica (strain OS155 / ATCC BAA-1091), this protein is Nicotinate-nucleotide--dimethylbenzimidazole phosphoribosyltransferase.